The following is a 353-amino-acid chain: S-adenosylmethionine:tRNA ribosyltransferase-isomerase (353 aa).

Belongs to the QueA family. As to quaternary structure, monomer.

The protein resides in the cytoplasm. It catalyses the reaction 7-aminomethyl-7-carbaguanosine(34) in tRNA + S-adenosyl-L-methionine = epoxyqueuosine(34) in tRNA + adenine + L-methionine + 2 H(+). It participates in tRNA modification; tRNA-queuosine biosynthesis. Its function is as follows. Transfers and isomerizes the ribose moiety from AdoMet to the 7-aminomethyl group of 7-deazaguanine (preQ1-tRNA) to give epoxyqueuosine (oQ-tRNA). In Rickettsia bellii (strain OSU 85-389), this protein is S-adenosylmethionine:tRNA ribosyltransferase-isomerase.